The primary structure comprises 231 residues: Small ribosomal subunit protein uS3 (231 aa).

A KH type-2 domain is found at 18 to 97; sequence VDEYLAKQFY…NPELNARVMA (80 aa).

The protein belongs to the universal ribosomal protein uS3 family. As to quaternary structure, part of the 30S ribosomal subunit.

In terms of biological role, binds the lower part of the 30S subunit head. The polypeptide is Small ribosomal subunit protein uS3 (Sulfolobus acidocaldarius (strain ATCC 33909 / DSM 639 / JCM 8929 / NBRC 15157 / NCIMB 11770)).